The following is a 1044-amino-acid chain: Unconventional myosin-Ic (1044 aa).

In terms of domain architecture, Myosin motor spans 28-712 (GVQDFVLLEN…TLFATEDSLE (685 aa)). ATP contacts are provided by residues N69, Y77, 120 to 129 (SGESGAGKTE), and 173 to 177 (NDNSS). K364 carries the N6-methyllysine modification. At S389 the chain carries Phosphoserine. K467 bears the N6-acetyllysine mark. S517 bears the Phosphoserine mark. The segment at 589 to 611 (LLQLVEILRSKEPAYIRCIKPND) is actin-binding. IQ domains lie at 715–744 (RQSLATKIQAAWRGFHWRQKFLRVKRSAIC) and 738–767 (VKRSAICIQSWWRGTLGRRKAAKRKWAAQT). A phosphoserine mark is found at S845 and S1022. The 175-residue stretch at 866-1040 (KDNYPQSVPR…NGHLAVVAPR (175 aa)) folds into the TH1 domain.

The protein belongs to the TRAFAC class myosin-kinesin ATPase superfamily. Myosin family. Interacts (via its IQ motifs) with CABP1 and CIB1; the interaction with CABP1 and CIB1 is calcium-dependent. Interacts (via tail domain) with PLEKHB1 (via PH domain); the interaction is not affected by the presence or absence of calcium and CALM. Interacts with POLR1A. Interacts with POLR2A. Component of the B-WICH complex, at least composed of SMARCA5/SNF2H, BAZ1B/WSTF, SF3B1, DEK, MYO1C, ERCC6, MYBBP1A and DDX21. Interacts (via its IQ motifs) with CALM; this precludes interaction with YWHAB. Interacts with YWHAB; this precludes interaction with CALM. Interacts with RPS6. Interacts with actin. Interacts with LLPH. Interacts with GLUT4. Interacts (via its IQ motifs) with SH3BGRL3; the interaction is dependent on calcium and takes place at membrane ruffles.

It localises to the cytoplasm. The protein localises to the nucleus. It is found in the cell cortex. Its subcellular location is the cell projection. The protein resides in the stereocilium membrane. It localises to the cytoplasmic vesicle. The protein localises to the ruffle membrane. Its function is as follows. Myosins are actin-based motor molecules with ATPase activity. Unconventional myosins serve in intracellular movements. Their highly divergent tails are presumed to bind to membranous compartments, which would be moved relative to actin filaments. Involved in glucose transporter recycling in response to insulin by regulating movement of intracellular GLUT4-containing vesicles to the plasma membrane. Component of the hair cell's (the sensory cells of the inner ear) adaptation-motor complex. Acts as a mediator of adaptation of mechanoelectrical transduction in stereocilia of vestibular hair cells. Binds phosphoinositides and links the actin cytoskeleton to cellular membranes. The protein is Unconventional myosin-Ic (Myo1c) of Rattus norvegicus (Rat).